Reading from the N-terminus, the 211-residue chain is dITP/XTP pyrophosphatase (211 aa).

Position 7 to 12 (7 to 12) interacts with substrate; it reads TSNKKK. 2 residues coordinate Mg(2+): glutamate 43 and aspartate 72. The active-site Proton acceptor is aspartate 72. Substrate is bound by residues serine 73, 169–172, lysine 190, and 195–196; these read FGYD and HR.

The protein belongs to the HAM1 NTPase family. Homodimer. The cofactor is Mg(2+).

The catalysed reaction is XTP + H2O = XMP + diphosphate + H(+). It carries out the reaction dITP + H2O = dIMP + diphosphate + H(+). The enzyme catalyses ITP + H2O = IMP + diphosphate + H(+). Its function is as follows. Pyrophosphatase that catalyzes the hydrolysis of nucleoside triphosphates to their monophosphate derivatives, with a high preference for the non-canonical purine nucleotides XTP (xanthosine triphosphate), dITP (deoxyinosine triphosphate) and ITP. Seems to function as a house-cleaning enzyme that removes non-canonical purine nucleotides from the nucleotide pool, thus preventing their incorporation into DNA/RNA and avoiding chromosomal lesions. This Hydrogenobaculum sp. (strain Y04AAS1) protein is dITP/XTP pyrophosphatase.